Consider the following 649-residue polypeptide: Flavin-dependent oxygenase ucdD (649 aa).

FAD-binding residues include Gln-92, Ile-185, Tyr-344, Asp-370, and Ser-386.

It belongs to the PheA/TfdB FAD monooxygenase family. As to quaternary structure, homodimer. It depends on FAD as a cofactor.

It participates in secondary metabolite biosynthesis. In terms of biological role, nonribosomal peptide synthetase that mediates the biosynthesis of usterphenyllins and uscandidusins, p-terphenyl derivatives. Within the pathway, ucdD catalyzes the formation of 3,15-dihydroxyterphenyllin via dihydroxylation at C-3 of ring A and C-15 of ring C of the terphenyllin intermediate. The pathway begin with the biosynthesis of 4-hydroxyphenylpyruvate (HPPA) from L-tyrosine, possibly by the aminotransferase ucdG. The nonribosomal peptide synthetase ucdA then condenses two HPPA units to produce atromentin. The key step in this pathway is the reduction and dehydration of atromentin to form a terphenyl triol intermediate, performed by the NAD-dependent dehydrogenase ucdB. Further O-methylation by the methyltransferase ucdC forms terphenyllin carrying two methoxy moieties at C-9 and C-12, and subsequent dihydroxylation at C-3 of ring A and C-15 of ring C by the flavin-dependent oxygenase ucdD leads to 3,15-dihydroxyterphenyllin. Prenylation by ucdE at position C-5 of ring A forms usterphenyllin B, and is followed by a second prenylation at position C-14 of ring C to form usterphenyllin A. The following furan ring formation that leads to uscandidusins A and B was proven to be an unexpected spontaneous non-enzymatic reaction. The polypeptide is Flavin-dependent oxygenase ucdD (Aspergillus ustus).